The following is a 487-amino-acid chain: Selenium-binding protein 2 (487 aa).

An N-acetylalanine modification is found at alanine 2. Positions 19 and 20 each coordinate selenite.

The protein belongs to the selenium-binding protein family. As to expression, mostly expressed in seedlings, leaves and stems, and, to a lower extent, in flowers and roots.

Required for the fusion of female gametophyte polar nuclei. The polypeptide is Selenium-binding protein 2 (SBP2) (Arabidopsis thaliana (Mouse-ear cress)).